A 360-amino-acid chain; its full sequence is Protein Wnt-2 (360 aa).

Residues 1–25 (MNAPLGGIWLGLPLLLTWLSPEVSS) form the signal peptide. Intrachain disulfides connect Cys76-Cys87, Cys127-Cys135, Cys137-Cys157, Cys206-Cys220, Cys208-Cys215, Cys278-Cys309, Cys294-Cys304, Cys308-Cys348, Cys324-Cys339, Cys326-Cys336, and Cys331-Cys332. Ser212 is lipidated: O-palmitoleoyl serine; by PORCN. Asn295 is a glycosylation site (N-linked (GlcNAc...) asparagine).

Belongs to the Wnt family. Palmitoleoylation is required for efficient binding to frizzled receptors. Depalmitoleoylation leads to Wnt signaling pathway inhibition.

The protein resides in the secreted. Its subcellular location is the extracellular space. It is found in the extracellular matrix. Ligand for members of the frizzled family of seven transmembrane receptors. Probable developmental protein. May be a signaling molecule which affects the development of discrete regions of tissues. Is likely to signal over only few cell diameters. The polypeptide is Protein Wnt-2 (WNT2) (Oryctolagus cuniculus (Rabbit)).